We begin with the raw amino-acid sequence, 163 residues long: Nucleotide-binding protein C8J_0350 (163 aa).

It belongs to the YajQ family.

Functionally, nucleotide-binding protein. The polypeptide is Nucleotide-binding protein C8J_0350 (Campylobacter jejuni subsp. jejuni serotype O:6 (strain 81116 / NCTC 11828)).